Here is a 126-residue protein sequence, read N- to C-terminus: Large ribosomal subunit protein bL20 (126 aa).

It belongs to the bacterial ribosomal protein bL20 family.

Functionally, binds directly to 23S ribosomal RNA and is necessary for the in vitro assembly process of the 50S ribosomal subunit. It is not involved in the protein synthesizing functions of that subunit. The sequence is that of Large ribosomal subunit protein bL20 from Buchnera aphidicola subsp. Baizongia pistaciae (strain Bp).